A 749-amino-acid chain; its full sequence is ATP-dependent zinc metalloprotease FtsH 3 (749 aa).

Over residues 1 to 17 (MTGDPPERRSNGDRLPA) the composition is skewed to basic and acidic residues. The tract at residues 1–67 (MTGDPPERRS…GRNGGGMRPF (67 aa)) is disordered. Residues 1 to 75 (MTGDPPERRS…PFRFPGGRWG (75 aa)) are Cytoplasmic-facing. The helical transmembrane segment at 76-96 (ILVFILVLLGLNWWISSNALA) threads the bilayer. The Extracellular segment spans residues 97–186 (PSERVRVPYS…NASPADNGPS (90 aa)). A helical membrane pass occupies residues 187–207 (LLVSILLGFGPVILIIALFVF). The Cytoplasmic segment spans residues 208–749 (LSRRMAGAAG…LGGSVRAGDA (542 aa)). 281–288 (GQPGTGKT) is an ATP binding site. H504 lines the Zn(2+) pocket. E505 is a catalytic residue. Zn(2+)-binding residues include H508 and D580. Positions 679 to 689 (GLEHMRPERVE) are enriched in basic and acidic residues. The disordered stretch occupies residues 679 to 749 (GLEHMRPERV…LGGSVRAGDA (71 aa)).

The protein in the central section; belongs to the AAA ATPase family. In the C-terminal section; belongs to the peptidase M41 family. Homohexamer. Requires Zn(2+) as cofactor.

The protein resides in the cell membrane. Its function is as follows. Acts as a processive, ATP-dependent zinc metallopeptidase for both cytoplasmic and membrane proteins. Plays a role in the quality control of integral membrane proteins. In Conexibacter woesei (strain DSM 14684 / CCUG 47730 / CIP 108061 / JCM 11494 / NBRC 100937 / ID131577), this protein is ATP-dependent zinc metalloprotease FtsH 3.